Reading from the N-terminus, the 686-residue chain is Putative cuticle collagen 99 (686 aa).

2 disordered regions span residues 42 to 79 (PPIG…PVGP) and 163 to 444 (GPIG…SLVA). The span at 67–79 (PPGPPGERGPVGP) shows a compositional bias: pro residues. Triple-helical region stretches follow at residues 142–201 (GMPG…KGDR), 230–263 (GPPG…GFDG), and 268–296 (GPKG…EKGD). Over residues 231–243 (PPGPPGPPGPPGP) the composition is skewed to pro residues. Over residues 246–256 (RDGRHGMKGDR) the composition is skewed to basic and acidic residues. Residues 306–318 (GQSVSTVSSSGSQ) are compositionally biased toward low complexity. 2 stretches are compositionally biased toward basic and acidic residues: residues 361 to 373 (EKGE…ETGD) and 401 to 417 (RDGR…HGLR). The segment at 394–439 (GPPGPPGRDGRPGEKGEKGEHGLRGDMGLPGPEGTPGKRGRRGRHG) is triple-helical region. Residues Asn446 and Asn535 are each glycosylated (N-linked (GlcNAc...) asparagine). Residues 475–650 (KNVIPGPPGP…TGPDGLPLPY (176 aa)) form a disordered region. Triple-helical region stretches follow at residues 479-536 (PGPP…SGNQ), 538-576 (GPRG…PGPM), and 577-636 (GLRG…PGLD). The span at 540-549 (RGPPGLPGPP) shows a compositional bias: pro residues. The segment covering 563-581 (QPGALGLPGHPGPMGLRGP) has biased composition (low complexity).

It belongs to the cuticular collagen family. As to quaternary structure, collagen polypeptide chains are complexed within the cuticle by disulfide bonds and other types of covalent cross-links.

Nematode cuticles are composed largely of collagen-like proteins. The cuticle functions both as an exoskeleton and as a barrier to protect the worm from its environment. This is Putative cuticle collagen 99 from Caenorhabditis briggsae.